The following is a 347-amino-acid chain: DNA-directed RNA polymerase subunit alpha (347 aa).

Residues 1–226 form an alpha N-terminal domain (alpha-NTD) region; it reads MLISQRPTLS…ELFGLARELN (226 aa). An alpha C-terminal domain (alpha-CTD) region spans residues 243–347; that stretch reads HIASFALPID…EQDYAETEQL (105 aa).

This sequence belongs to the RNA polymerase alpha chain family. In terms of assembly, homodimer. The RNAP catalytic core consists of 2 alpha, 1 beta, 1 beta' and 1 omega subunit. When a sigma factor is associated with the core the holoenzyme is formed, which can initiate transcription.

It catalyses the reaction RNA(n) + a ribonucleoside 5'-triphosphate = RNA(n+1) + diphosphate. In terms of biological role, DNA-dependent RNA polymerase catalyzes the transcription of DNA into RNA using the four ribonucleoside triphosphates as substrates. In Mycobacterium bovis (strain ATCC BAA-935 / AF2122/97), this protein is DNA-directed RNA polymerase subunit alpha.